Reading from the N-terminus, the 444-residue chain is Chromosome partition protein MukF (444 aa).

The leucine-zipper stretch occupies residues 212–240; the sequence is LDETSGNLRELQDTLNAAGDKLQAQLLRI.

This sequence belongs to the MukF family. In terms of assembly, interacts, and probably forms a ternary complex, with MukE and MukB via its C-terminal region. The complex formation is stimulated by calcium or magnesium. It is required for an interaction between MukE and MukB.

It is found in the cytoplasm. The protein localises to the nucleoid. Functionally, involved in chromosome condensation, segregation and cell cycle progression. May participate in facilitating chromosome segregation by condensation DNA from both sides of a centrally located replisome during cell division. Not required for mini-F plasmid partitioning. Probably acts via its interaction with MukB and MukE. Overexpression results in anucleate cells. It has a calcium binding activity. The chain is Chromosome partition protein MukF from Haemophilus influenzae (strain ATCC 51907 / DSM 11121 / KW20 / Rd).